The chain runs to 1485 residues: MIERGKFRSLTLVNWNGFFARTFDLDELVTTLSGGNGAGKSTTMAAFVTALIPDLTLLHFRNTTEAGATSGSRDKGLHGKLRPGVCYAALDVVNSRHQRVLVGVRLQQVAGRDRKVDIKPFAIQGLPTAYQPTQLLTETVDGRQARVLALPELKERVEAIDGVQFKQFNSITDYHALMFDLGVVPRRLRSAADRSKFYRLIEASLYGGISSAITRSLRDYLLPENGGVRKAFQDMEAALRENRMTLEAIRVTQSDRDLFKHLISEATAYVSADYMRHANERRSHLDQALQLRRELLGGRRQLLSEQYRHVEMARELEEQNGAEADLETDYQAASDHLNLVQTALRQREKIERYQGDLEELSYRLDEQSEVAAEAQEQYESCQERSEAAEAEVDELKSQLADYQQALDVQQTRAIQYQQALQALARAQTLCTLPALSADDVESWLEDFRAREEEATELLLQLEQKLSVANAAHSQFEEAYRLVARVVGEVSRSDAWQAGRALLREWPALQHQAQRVAPIGARLAELEQRLNAQQDAERLLQECVKRSGRDCDAQQLDALQAELEAQIDTLTQQAADAGERSMALRQELEQIAGRVGTLSARAPAWIAAQEALNALESQCGETLEESRAVTDQMQQLLEREREYTVERDEIAARKGALEREIERLSQPGGAEDARLIALAERFGGVLLSEIYDDVTLDDAPYFSALYGPSRHAIVVPDLAAVRAQLAGLEECPEDLYLIEGDPQSFDDSVFAVEELEKAVVVKIADRQWRYSRFPSLPLFGRAARESRLETLYTEREALAERYATLSFDVQKIQRLHHAFSRFIGSHLAVVFDNDPEQELRQLQQRRGEIEREFTGQDAQTQQQRQQLQQARELAGLLNRLVPQVGLLADETLPDRVDELREELEQARDAARYLQQHGATLAALEPVIGVLQSDPQQHEQLQQDYQQALQRQRLTKQQAFALTEVAQRRAHFSYSDAVGMLGENADLNERLRQRLEHAEADRSRSREQLRQHQAQLAQYNQVLASLKSAFDAKRDMLQELQQEMQDIGVVADASAEARARTRRDELHAALSENRSRRNQLEKQITICEAEMESLIKRLRKAERDYHLMRTQVTQAKAGWCAVMRLVRDNGVERRLHRRELAYMDADELRSMSDKALGALRLAVADNEHLRDVLRLSEDPKRPERKVQFYVAVYQHLRERIRQDIIRSDDPIDAIEQMEIELARLTEELTAREQKLAISARSVANIIRKTIQREQNRIRMLNQGLQSVAFGQVNSVRLNVNVRDSHAMLLNVLSEQQEQHQDLFNSNRLTFSEALAKLYQRLNPQIDMGQRTPQTIGEELLDYRSYLEMEVEVNRGSDGWLRAESGALSTGEAIGTGMSILVMVVQSWEEESRRLRGKDISPCRLLFLDEAARLDAKSIATLFELCERLEMQLIIAAPENISPEKGTTYKLVRKVFNHIEHVHVVGLRGFSAAAEEEHMAQPLEDTPA.

Position 34-41 (Gly34–Ser41) interacts with ATP. Coiled coils occupy residues Glu311–Arg480 and Gly519–Gln665. Residues Pro666–Arg783 form a flexible hinge region. Coiled coils occupy residues Asn832–Ala1115 and Ile1209–Val1265.

The protein belongs to the SMC family. MukB subfamily. In terms of assembly, homodimerization via its hinge domain. Binds to DNA via its C-terminal region. Interacts, and probably forms a ternary complex, with MukE and MukF via its C-terminal region. The complex formation is stimulated by calcium or magnesium. Interacts with tubulin-related protein FtsZ.

It localises to the cytoplasm. The protein localises to the nucleoid. Its function is as follows. Plays a central role in chromosome condensation, segregation and cell cycle progression. Functions as a homodimer, which is essential for chromosome partition. Involved in negative DNA supercoiling in vivo, and by this means organize and compact chromosomes. May achieve or facilitate chromosome segregation by condensation DNA from both sides of a centrally located replisome during cell division. This chain is Chromosome partition protein MukB, found in Edwardsiella ictaluri (strain 93-146).